Consider the following 160-residue polypeptide: Large ribosomal subunit protein uL22c (160 aa).

It belongs to the universal ribosomal protein uL22 family. As to quaternary structure, part of the 50S ribosomal subunit.

The protein resides in the plastid. Its subcellular location is the chloroplast. In terms of biological role, this protein binds specifically to 23S rRNA. Functionally, the globular domain of the protein is located near the polypeptide exit tunnel on the outside of the subunit, while an extended beta-hairpin is found that lines the wall of the exit tunnel in the center of the 70S ribosome. The protein is Large ribosomal subunit protein uL22c (rpl22) of Arabis hirsuta (Hairy rock-cress).